The chain runs to 333 residues: Putative F-box protein At4g11580 (333 aa).

The 48-residue stretch at V11–V58 folds into the F-box domain.

This is Putative F-box protein At4g11580 from Arabidopsis thaliana (Mouse-ear cress).